A 141-amino-acid polypeptide reads, in one-letter code: MTVQFAADKTNIPGRQLFRKWVGAALNKPAEIVIRIVGMQEGEVLNRKFRGKDSATNVLTFVYSDDVPLLGDIVLCAPVISREAEQQNKDLVAHYAHLIVHGVLHLQGYDHISDEDAVVMESLETKIITRLNYPDPYVIQQ.

Positions 101, 105, and 111 each coordinate Zn(2+).

It belongs to the endoribonuclease YbeY family. Requires Zn(2+) as cofactor.

Its subcellular location is the cytoplasm. Single strand-specific metallo-endoribonuclease involved in late-stage 70S ribosome quality control and in maturation of the 3' terminus of the 16S rRNA. This is Endoribonuclease YbeY from Nitrosomonas eutropha (strain DSM 101675 / C91 / Nm57).